A 563-amino-acid polypeptide reads, in one-letter code: Rab escort protein 1 (563 aa).

Residues 538–563 are disordered; sequence ELFKEETSPAENTTEEENDGGVEIED. Over residues 550 to 563 the composition is skewed to acidic residues; the sequence is TTEEENDGGVEIED.

The protein belongs to the Rab GDI family. Heterotrimer composed of the alpha subunit RGTA, the beta subunit RGTB and REP; within this trimer, RGTA and RGTB form the catalytic component, while REP mediates peptide substrate binding. Expressed in roots, leaves and flowers.

The protein resides in the cytoplasm. Functionally, substrate-binding subunit of the Rab geranylgeranyltransferase (GGTase) complex. Binds unprenylated Rab proteins and presents the substrate peptide to the catalytic component composed of the alpha subunit RGTA and the beta subunit RGTB. Preferentially binds the GDP-bound form of Rab and stimulates geranylgeranylation of various Rab GTPases in vitro. The chain is Rab escort protein 1 from Arabidopsis thaliana (Mouse-ear cress).